We begin with the raw amino-acid sequence, 89 residues long: Small ribosomal subunit protein uS15 (89 aa).

The protein belongs to the universal ribosomal protein uS15 family. Part of the 30S ribosomal subunit. Forms a bridge to the 50S subunit in the 70S ribosome, contacting the 23S rRNA.

One of the primary rRNA binding proteins, it binds directly to 16S rRNA where it helps nucleate assembly of the platform of the 30S subunit by binding and bridging several RNA helices of the 16S rRNA. Its function is as follows. Forms an intersubunit bridge (bridge B4) with the 23S rRNA of the 50S subunit in the ribosome. In Methylorubrum populi (strain ATCC BAA-705 / NCIMB 13946 / BJ001) (Methylobacterium populi), this protein is Small ribosomal subunit protein uS15.